Consider the following 2471-residue polypeptide: Histidine protein kinase 1 (2471 aa).

Positions 1–10 are enriched in polar residues; the sequence is MSMNFFNSSE. 3 disordered regions span residues 1–30, 52–75, and 395–415; these read MSMN…TEHY, ETKK…VPPS, and RQGS…FNIG. Over residues 11-30 the composition is skewed to basic and acidic residues; that stretch reads PARDHKPDQEKETVMTTEHY. The Protein kinase domain maps to 358 to 636; it reads EHPSQSTDQK…DCHSLLHDLI (279 aa). Residues 2004-2225 enclose the Histidine kinase domain; the sequence is NMSHEIRTPF…TFYVSVIMDA (222 aa). Position 2007 is a phosphohistidine; by autocatalysis (His2007). Positions 2340 to 2466 constitute a Response regulatory domain; sequence RILLAEDNLL…ELRRILTKVG (127 aa). At Asp2394 the chain carries 4-aspartylphosphate.

In terms of processing, the phosphorelay mechanism involves the sequential transfer of a phosphate group from His-2007 (H1) in the histidine kinase domain (transmitter domain) to Asp-2394 (D1) of the response regulatory domain (receiver domain). This transfer probably occurs between two CHK1 molecules, rather than intramolecularly.

The catalysed reaction is ATP + protein L-histidine = ADP + protein N-phospho-L-histidine.. In terms of biological role, histidine kinase involved in a two-component signaling pathway that regulates cell wall mannan and glucan biosynthesis. Regulates quorum sensing as well as hyphal formation, biofilm formation, chlamidospore formation, and virulence. Plays a prominent role in phagocyte activation. Involved in the covering of the most potent pro-inflammatory cell wall molecules, the beta-glucans, underneath a dense mannan layer, so that the pathogen becomes partly invisible for immune cells such as phagocytes. The protein is Histidine protein kinase 1 (CHK1) of Candida albicans (strain SC5314 / ATCC MYA-2876) (Yeast).